A 260-amino-acid chain; its full sequence is Imidazole glycerol phosphate synthase subunit HisF (260 aa).

Active-site residues include aspartate 11 and aspartate 130.

It belongs to the HisA/HisF family. As to quaternary structure, heterodimer of HisH and HisF.

It is found in the cytoplasm. It catalyses the reaction 5-[(5-phospho-1-deoxy-D-ribulos-1-ylimino)methylamino]-1-(5-phospho-beta-D-ribosyl)imidazole-4-carboxamide + L-glutamine = D-erythro-1-(imidazol-4-yl)glycerol 3-phosphate + 5-amino-1-(5-phospho-beta-D-ribosyl)imidazole-4-carboxamide + L-glutamate + H(+). Its pathway is amino-acid biosynthesis; L-histidine biosynthesis; L-histidine from 5-phospho-alpha-D-ribose 1-diphosphate: step 5/9. Functionally, IGPS catalyzes the conversion of PRFAR and glutamine to IGP, AICAR and glutamate. The HisF subunit catalyzes the cyclization activity that produces IGP and AICAR from PRFAR using the ammonia provided by the HisH subunit. The protein is Imidazole glycerol phosphate synthase subunit HisF of Endomicrobium trichonymphae.